Here is a 250-residue protein sequence, read N- to C-terminus: Pre-protein VI (250 aa).

Residues 1–33 constitute a propeptide that is removed on maturation; sequence MEDINFASLAPRHGSRPFMGNWQDIGTSNMSGG. The amphipathic alpha-helix essential for membrane lytic activity stretch occupies residues 34–54; it reads AFSWGSLWSGIKNFGSTIKNY. The interval 36–53 is involved in endosomal membrane lysis; sequence SWGSLWSGIKNFGSTIKN. An interaction with hexon protein region spans residues 48–74; sequence GSTIKNYGSKAWNSSTGQMLRDKLKEQ. Positions 67 to 76 match the Nuclear export signal motif; sequence LRDKLKEQNF. Positions 103-147 are disordered; the sequence is INSKLDPRPPVEEPPPAVETVSPEGRGEKRPRPDREETLVTQIDE. At Ser-124 the chain carries Phosphoserine; by host. Basic and acidic residues predominate over residues 127-140; that stretch reads GRGEKRPRPDREET. The Nuclear localization signal motif lies at 131–135; the sequence is KRPRP. Thr-143 is modified (phosphothreonine; by host). Residues 148–151 carry the PPXY motif motif; that stretch reads PPSY. A compositionally biased stretch (low complexity) spans 206-220; sequence PSRASLRRAASGPRS. Residues 206 to 226 form a disordered region; sequence PSRASLRRAASGPRSMRPVAS. The Nuclear export signal motif lies at 231 to 242; that stretch reads STLNSIVGLGVQ. The interval 233–239 is interaction with hexon protein; it reads LNSIVGL. The interval 240 to 250 is binds to importin alpha/beta, involved in hexon nuclear import; that stretch reads GVQSLKRRRCF. The Nuclear localization signal signature appears at 245 to 248; the sequence is KRRR.

This sequence belongs to the adenoviridae protein VI family. In terms of assembly, interacts with hexon protein; this interaction allows nuclear import of hexon trimers and possibly pre-capsid assembly. Interacts (via C-terminal NLS) with importin alpha/beta. As to quaternary structure, interacts (via PPxY motif) with host NEDD4 ubiquitine ligase; this interaction might play a role in virus intracellular transport during entry. Part of a complex composed of the core-capsid bridging protein, the endosome lysis protein VI and the hexon-linking protein VIII; these interactions bridge the virus core to the capsid. Interacts with peripentonal hexons; this interaction stabilizes the capsid by gluing two peripentonal hexons together and joining them with an adjacent group-of-nine hexon. Heterodimer with the viral protease; disulfide-linked. Interacts with the viral protease. In terms of processing, ubiquitinated by Nedd4 following partial capsid disassembly; which might play a role in intracellular virus movement during entry. Contains the major nuclear import and export signals. Proteolytically removed during virion maturation. The processing of the C-terminus turns the precursor into a mature viral structural protein and abrogates its ability to promote hexon import and act as a potential chaperone protein.

It is found in the host nucleus. Its subcellular location is the host cytoplasm. The protein resides in the virion. Functionally, during virus assembly, promotes hexon trimers nuclear import through nuclear pore complexes via an importin alpha/beta-dependent mechanism. By analogy to herpesviruses capsid assembly, might act as a chaperone to promote the formation of the icosahedral capsid. Structural component of the virion that provides increased stability to the particle shell through its interaction with the core-capsid bridging protein and the hexon-linking protein VIII. Fibers shedding during virus entry into host cell allows the endosome lysis protein to be exposed as a membrane-lytic peptide. Exhibits pH-independent membrane fragmentation activity and probably mediates viral rapid escape from host endosome via organellar membrane lysis. It is not clear if it then remains partially associated with the capsid and involved in the intracellular microtubule-dependent transport of capsid to the nucleus, or if it is lost during endosomal penetration. Its function is as follows. Cofactor that activates the viral protease. Binds to viral protease in a 1:1 ratio. The protein is Pre-protein VI of Human adenovirus C serotype 2 (HAdV-2).